A 304-amino-acid chain; its full sequence is Sperm microtubule inner protein 6 (304 aa).

It belongs to the SPMIP6 family. As to quaternary structure, microtubule inner protein component of sperm flagellar doublet microtubules. Interacts with alpha-tubulin.

Its subcellular location is the cytoplasm. The protein resides in the cytoskeleton. The protein localises to the nucleus. It is found in the mitochondrion. It localises to the flagellum axoneme. Functionally, may participate in intramanchette transport and midpiece formation of the sperm tail. May play a potential role in somatic cell proliferation. The protein is Sperm microtubule inner protein 6 (SPMIP6) of Bos taurus (Bovine).